A 417-amino-acid polypeptide reads, in one-letter code: Gamma-glutamyl phosphate reductase (417 aa).

This sequence belongs to the gamma-glutamyl phosphate reductase family.

The protein localises to the cytoplasm. The enzyme catalyses L-glutamate 5-semialdehyde + phosphate + NADP(+) = L-glutamyl 5-phosphate + NADPH + H(+). The protein operates within amino-acid biosynthesis; L-proline biosynthesis; L-glutamate 5-semialdehyde from L-glutamate: step 2/2. Its function is as follows. Catalyzes the NADPH-dependent reduction of L-glutamate 5-phosphate into L-glutamate 5-semialdehyde and phosphate. The product spontaneously undergoes cyclization to form 1-pyrroline-5-carboxylate. The chain is Gamma-glutamyl phosphate reductase from Haemophilus influenzae (strain PittEE).